Consider the following 96-residue polypeptide: Co-chaperonin GroES (96 aa).

This sequence belongs to the GroES chaperonin family. In terms of assembly, heptamer of 7 subunits arranged in a ring. Interacts with the chaperonin GroEL.

Its subcellular location is the cytoplasm. In terms of biological role, together with the chaperonin GroEL, plays an essential role in assisting protein folding. The GroEL-GroES system forms a nano-cage that allows encapsulation of the non-native substrate proteins and provides a physical environment optimized to promote and accelerate protein folding. GroES binds to the apical surface of the GroEL ring, thereby capping the opening of the GroEL channel. This chain is Co-chaperonin GroES, found in Actinobacillus pleuropneumoniae serotype 7 (strain AP76).